The following is a 198-amino-acid chain: Segregation and condensation protein B (198 aa).

The interval 168-198 is disordered; sequence KLADPATDEPDQNEMDLFFDRFNQSKEQEEE.

Belongs to the ScpB family. In terms of assembly, homodimer. Homodimerization may be required to stabilize the binding of ScpA to the Smc head domains. Component of a cohesin-like complex composed of ScpA, ScpB and the Smc homodimer, in which ScpA and ScpB bind to the head domain of Smc. The presence of the three proteins is required for the association of the complex with DNA.

It localises to the cytoplasm. Functionally, participates in chromosomal partition during cell division. May act via the formation of a condensin-like complex containing Smc and ScpA that pull DNA away from mid-cell into both cell halves. The chain is Segregation and condensation protein B from Listeria monocytogenes serovar 1/2a (strain ATCC BAA-679 / EGD-e).